A 579-amino-acid chain; its full sequence is Ribonucleoside-diphosphate reductase small chain (579 aa).

The Fe cation site is built by D130, E160, and H163. Residue Y167 is part of the active site. 3 residues coordinate Fe cation: E225, E258, and H261. The 145-residue stretch at 435-579 (DMTWTLKDVH…VSVFVDQFYR (145 aa)) folds into the Fido domain.

The protein belongs to the ribonucleoside diphosphate reductase small chain family. In terms of assembly, heterotetramer composed of a homodimer of the large subunit (R1) and a homodimer of the small subunit (R2). Larger multisubunit protein complex are also active, composed of (R1)n(R2)n. The cofactor is Fe cation.

It carries out the reaction a 2'-deoxyribonucleoside 5'-diphosphate + [thioredoxin]-disulfide + H2O = a ribonucleoside 5'-diphosphate + [thioredoxin]-dithiol. Functionally, ribonucleoside-diphosphate reductase holoenzyme provides the precursors necessary for viral DNA synthesis. Allows virus growth in non-dividing cells. Catalyzes the biosynthesis of deoxyribonucleotides from the corresponding ribonucleotides. The protein is Ribonucleoside-diphosphate reductase small chain of Magallana gigas (Pacific oyster).